The sequence spans 400 residues: Phosphoglycerate kinase (400 aa).

Substrate contacts are provided by residues 24 to 26 (DFN), R40, 63 to 66 (HFGR), R121, and R154. ATP contacts are provided by residues K205, G296, E327, and 356–359 (GGDS).

It belongs to the phosphoglycerate kinase family. As to quaternary structure, monomer.

It is found in the cytoplasm. It carries out the reaction (2R)-3-phosphoglycerate + ATP = (2R)-3-phospho-glyceroyl phosphate + ADP. The protein operates within carbohydrate degradation; glycolysis; pyruvate from D-glyceraldehyde 3-phosphate: step 2/5. This chain is Phosphoglycerate kinase, found in Nostoc punctiforme (strain ATCC 29133 / PCC 73102).